A 718-amino-acid chain; its full sequence is Mitotic spindle assembly checkpoint protein MAD1 (718 aa).

Met1 is modified (N-acetylmethionine). Ser16 carries the post-translational modification Phosphoserine. Positions 46–632 form a coiled coil; the sequence is QQSMQLEERA…QTKIQEFRKA (587 aa). Lys61 is modified (N6-acetyllysine; alternate). Residue Lys61 forms a Glycyl lysine isopeptide (Lys-Gly) (interchain with G-Cter in SUMO2); alternate linkage. Residues 79 to 82 carry the Nuclear localization signal motif; sequence KRAR. At Ser214 the chain carries Phosphoserine. An important for interaction with IK region spans residues 301–340; sequence VGLELENERLLAKLQSWERLDQTMGLSIRTPEDLSRFVVE. The interval 380-532 is necessary for interaction with NEK2; the sequence is LLEERKKRET…EAQLERRALQ (153 aa). Ser428 carries the phosphoserine modification. The interval 439 to 480 is important for interaction with IK; that stretch reads EDMVQKVHSHSAEMEAQLSQALEELGGQKQRADMLEMELKML. Residues 540-551 are necessary for interaction with MAD2L1; that stretch reads TKVLHMSLNPTS. Phosphoserine is present on residues Ser598 and Ser610. At Tyr634 the chain carries Phosphotyrosine. Thr716 carries the phosphothreonine modification.

Belongs to the MAD1 family. In terms of assembly, homodimer. Dimerizes via its N- and C- terminal regions. Heterodimerizes with MAD2L1 in order to form a tetrameric MAD1L1-MAD2L1 core complex. Interacts with the closed conformation form of MAD2L1 (C-MAD2) and open conformation form of MAD2L1 (O-MAD2). It is unclear whether MAD1L1 dimerization promotes the conversion of closed to open conformation of MAD2L1. Formation of a heterotetrameric core complex containing two molecules each of MAD1L1 and of MAD2L1 promotes binding of another molecule of MAD2L1 to each MAD2L1, resulting in a heterohexamer. Perturbation of the original MAD1L1-MAD2L1 structure by the spindle checkpoint may decrease MAD2L1 affinity for MAD1L1. CDC20 can compete with MAD1L1 for MAD2L1 binding, until the attachment and/or tension dampen the checkpoint signal, preventing further release of MAD2L1 on to CDC20. Also able to interact with the BUB1/BUB3 complex. Interacts with NEK2. Interacts with TTK. Interacts with TPR; the interactions occurs in a microtubule-independent manner. Interacts with IK. Interacts with the viral Tax protein. Interacts with PRAP1. Interacts with MAD2L1; this interaction leads to the cytoplasmic sequestration of MAD2L1. Interacts with PRAP1. Phosphorylated; by BUB1. Become hyperphosphorylated in late S through M phases or after mitotic spindle damage. Phosphorylated; by TTK. Expressed in hepatocellular carcinomas and hepatoma cell lines (at protein level).

It localises to the nucleus. It is found in the chromosome. The protein resides in the centromere. The protein localises to the kinetochore. Its subcellular location is the nucleus envelope. It localises to the cytoplasm. It is found in the cytoskeleton. The protein resides in the microtubule organizing center. The protein localises to the centrosome. Its subcellular location is the spindle. It localises to the spindle pole. Component of the spindle-assembly checkpoint that prevents the onset of anaphase until all chromosomes are properly aligned at the metaphase plate. Forms a heterotetrameric complex with the closed conformation form of MAD2L1 (C-MAD2) at unattached kinetochores during prometaphase, recruits an open conformation of MAD2L1 (O-MAD2) and promotes the conversion of O-MAD2 to C-MAD2, which ensures mitotic checkpoint signaling. Its function is as follows. Sequesters MAD2L1 in the cytoplasm preventing its function as an activator of the mitotic spindle assembly checkpoint (SAC) resulting in SAC impairment and chromosomal instability in hepatocellular carcinomas. The protein is Mitotic spindle assembly checkpoint protein MAD1 (MAD1L1) of Homo sapiens (Human).